The following is a 533-amino-acid chain: Suppressor of cytokine signaling 6 (533 aa).

Disordered regions lie at residues 54–136 and 177–199; these read CDIG…WPLR and ELRD…PGDL. Residues 59–69 are compositionally biased toward basic and acidic residues; it reads EDEKGKNRSKS. The span at 76 to 88 shows a compositional bias: basic residues; sequence LKRRLSAKQKTKG. The span at 177 to 189 shows a compositional bias: basic and acidic residues; that stretch reads ELRDLQPEPRPES. The 108-residue stretch at 382–489 folds into the SH2 domain; sequence WYWGPITRWE…TYPVRLTNPV (108 aa). The region spanning 484–533 is the SOCS box domain; the sequence is RLTNPVSRFMQVRSLQYLCRFVIRQYTRIDLIQKLPLPNKMKDYLQEKHY.

In terms of assembly, interacts with KIT (phosphorylated). Interacts with RBCK1. Interacts with phosphorylated IRS4. Interacts with PIM3.

Its pathway is protein modification; protein ubiquitination. In terms of biological role, SOCS family proteins form part of a classical negative feedback system that regulates cytokine signal transduction. May be a substrate recognition component of a SCF-like ECS (Elongin BC-CUL2/5-SOCS-box protein) E3 ubiquitin-protein ligase complex which mediates the ubiquitination and subsequent proteasomal degradation of target proteins. Regulates KIT degradation by ubiquitination of the tyrosine-phosphorylated receptor. This is Suppressor of cytokine signaling 6 (Socs6) from Mus musculus (Mouse).